The chain runs to 100 residues: Integration host factor subunit alpha (100 aa).

The disordered stretch occupies residues 54–73 (DLRDKRQRPGRNPKTGEEIP).

The protein belongs to the bacterial histone-like protein family. Heterodimer of an alpha and a beta chain.

Its function is as follows. This protein is one of the two subunits of integration host factor, a specific DNA-binding protein that functions in genetic recombination as well as in transcriptional and translational control. The chain is Integration host factor subunit alpha from Pseudomonas aeruginosa (strain UCBPP-PA14).